A 699-amino-acid polypeptide reads, in one-letter code: TPR repeat-containing thioredoxin TTL1 (699 aa).

Positions 1 to 211 are disordered; the sequence is MPKSVKPISE…SSSRSSSTVA (211 aa). Basic and acidic residues predominate over residues 9–20; it reads SESDKLSDHLRD. Phosphoserine is present on residues serine 39 and serine 42. Composition is skewed to low complexity over residues 52 to 70 and 83 to 135; these read TTTT…SSGS and RSNS…TSPA. Gly residues predominate over residues 166–182; it reads SGTGTYGHGSIMRGGGI. Positions 195-210 are enriched in low complexity; sequence NSPVNVGSSSRSSSTV. TPR repeat units lie at residues 227–260, 262–294, 296–328, 419–452, 465–498, 499–532, and 534–566; these read SEEV…SPTN, AYRS…DPNY, RAHH…SDPM, AYIY…DPRC, VARA…DPCN, AILY…QPSY, and KPLL…LPHD. Positions 605–691 constitute a Thioredoxin domain; it reads QFKSAMNLPG…IVCPSKEVLE (87 aa).

As to expression, expressed in the root elongation zone, stele, root cap, embryo vascular system, leaf axilar buds, silique abscission zone and guard cells.

In terms of biological role, involved in responses to osmotic stress and abscisic acid (ABA). May act as a positive regulator of ABA signaling during germination and seedling development under stress. This chain is TPR repeat-containing thioredoxin TTL1 (TTL1), found in Arabidopsis thaliana (Mouse-ear cress).